The chain runs to 240 residues: Venom hemolysin-like protein 1 (240 aa).

The N-terminal stretch at 1-18 (MQYKLILLVVGLFQASLA) is a signal peptide. Positions 25–50 (ESVPHPSKDVAPPDTQDSSTQTEVTT) are disordered. Residues 39 to 50 (TQDSSTQTEVTT) show a composition bias toward polar residues.

As to expression, expressed by the venom gland (anterior main gland) (at protein level).

Its subcellular location is the secreted. The polypeptide is Venom hemolysin-like protein 1 (Platymeris rhadamanthus (Red spot assassin bug)).